Consider the following 458-residue polypeptide: Chromosomal replication initiator protein DnaA (458 aa).

Positions 1-93 (MKTELSEVWQ…NVIEDPAAEP (93 aa)) are domain I, interacts with DnaA modulators. A domain II region spans residues 94–119 (VDAPNVADLPAGTSAPAAEQNARLLG). Residues 120-336 (YINPKYTFET…GALTRVVAYA (217 aa)) form a domain III, AAA+ region region. ATP-binding residues include G164, G166, K167, and T168. Residues 337-458 (NMLKCPLTYD…EQLIARIRAE (122 aa)) are domain IV, binds dsDNA.

Belongs to the DnaA family. As to quaternary structure, oligomerizes as a right-handed, spiral filament on DNA at oriC.

It localises to the cytoplasm. Plays an essential role in the initiation and regulation of chromosomal replication. ATP-DnaA binds to the origin of replication (oriC) to initiate formation of the DNA replication initiation complex once per cell cycle. Binds the DnaA box (a 9 base pair repeat at the origin) and separates the double-stranded (ds)DNA. Forms a right-handed helical filament on oriC DNA; dsDNA binds to the exterior of the filament while single-stranded (ss)DNA is stabiized in the filament's interior. The ATP-DnaA-oriC complex binds and stabilizes one strand of the AT-rich DNA unwinding element (DUE), permitting loading of DNA polymerase. After initiation quickly degrades to an ADP-DnaA complex that is not apt for DNA replication. Binds acidic phospholipids. The sequence is that of Chromosomal replication initiator protein DnaA from Symbiobacterium thermophilum (strain DSM 24528 / JCM 14929 / IAM 14863 / T).